We begin with the raw amino-acid sequence, 173 residues long: Small ribosomal subunit protein mS25 (173 aa).

The protein belongs to the mitochondrion-specific ribosomal protein mS25 family. As to quaternary structure, component of the mitochondrial small ribosomal subunit (mt-SSU). Mature mammalian 55S mitochondrial ribosomes consist of a small (28S) and a large (39S) subunit. The 28S small subunit contains a 12S ribosomal RNA (12S mt-rRNA) and 30 different proteins. The 39S large subunit contains a 16S rRNA (16S mt-rRNA), a copy of mitochondrial valine transfer RNA (mt-tRNA(Val)), which plays an integral structural role, and 52 different proteins.

It localises to the mitochondrion. In Homo sapiens (Human), this protein is Small ribosomal subunit protein mS25 (MRPS25).